Consider the following 93-residue polypeptide: MKKTLMLLVMVVALVILPFFINHGGEYGGSDGEAESQIQALAPQYKPWFQPLYEPASGEIESLLFTLQGSLGAAVIFYILGYCKGKQRRDDRA.

2 helical membrane passes run 5–25 (LMLL…NHGG) and 63–83 (LLFT…LGYC).

It belongs to the CbiN family. As to quaternary structure, forms an energy-coupling factor (ECF) transporter complex composed of an ATP-binding protein (A component, CbiO), a transmembrane protein (T component, CbiQ) and 2 possible substrate-capture proteins (S components, CbiM and CbiN) of unknown stoichimetry.

The protein resides in the cell inner membrane. Its pathway is cofactor biosynthesis; adenosylcobalamin biosynthesis. In terms of biological role, part of the energy-coupling factor (ECF) transporter complex CbiMNOQ involved in cobalt import. This chain is Cobalt transport protein CbiN, found in Salmonella paratyphi B (strain ATCC BAA-1250 / SPB7).